Consider the following 423-residue polypeptide: Mannose-6-phosphate isomerase (423 aa).

An N-acetylalanine modification is found at Ala-2. Phosphoserine is present on residues Ser-102 and Ser-108. Zn(2+) is bound by residues Gln-110, His-112, Glu-137, and His-276. Residue Arg-295 is part of the active site.

Belongs to the mannose-6-phosphate isomerase type 1 family. Zn(2+) is required as a cofactor. In terms of tissue distribution, expressed in all tissues, but more abundant in heart, brain and skeletal muscle.

It localises to the cytoplasm. The catalysed reaction is D-mannose 6-phosphate = D-fructose 6-phosphate. It functions in the pathway nucleotide-sugar biosynthesis; GDP-alpha-D-mannose biosynthesis; alpha-D-mannose 1-phosphate from D-fructose 6-phosphate: step 1/2. In terms of biological role, isomerase that catalyzes the interconversion of fructose-6-P and mannose-6-P and has a critical role in the supply of D-mannose derivatives required for many eukaryotic glycosylation reactions. The sequence is that of Mannose-6-phosphate isomerase from Homo sapiens (Human).